The chain runs to 340 residues: Glycerol-3-phosphate dehydrogenase [NAD(P)+] (340 aa).

4 residues coordinate NADPH: Ser-14, Phe-15, Arg-35, and Lys-108. Residues Lys-108 and Gly-136 each coordinate sn-glycerol 3-phosphate. Residue Ala-140 participates in NADPH binding. The sn-glycerol 3-phosphate site is built by Lys-191, Asp-244, Ser-254, Arg-255, and Asn-256. Lys-191 (proton acceptor) is an active-site residue. Residue Arg-255 coordinates NADPH. Positions 279 and 281 each coordinate NADPH.

Belongs to the NAD-dependent glycerol-3-phosphate dehydrogenase family.

The protein resides in the cytoplasm. It catalyses the reaction sn-glycerol 3-phosphate + NAD(+) = dihydroxyacetone phosphate + NADH + H(+). The enzyme catalyses sn-glycerol 3-phosphate + NADP(+) = dihydroxyacetone phosphate + NADPH + H(+). The protein operates within membrane lipid metabolism; glycerophospholipid metabolism. In terms of biological role, catalyzes the reduction of the glycolytic intermediate dihydroxyacetone phosphate (DHAP) to sn-glycerol 3-phosphate (G3P), the key precursor for phospholipid synthesis. The protein is Glycerol-3-phosphate dehydrogenase [NAD(P)+] of Ectopseudomonas mendocina (strain ymp) (Pseudomonas mendocina).